We begin with the raw amino-acid sequence, 209 residues long: ATP phosphoribosyltransferase (209 aa).

This sequence belongs to the ATP phosphoribosyltransferase family. Short subfamily. In terms of assembly, heteromultimer composed of HisG and HisZ subunits.

The protein localises to the cytoplasm. It carries out the reaction 1-(5-phospho-beta-D-ribosyl)-ATP + diphosphate = 5-phospho-alpha-D-ribose 1-diphosphate + ATP. The protein operates within amino-acid biosynthesis; L-histidine biosynthesis; L-histidine from 5-phospho-alpha-D-ribose 1-diphosphate: step 1/9. Catalyzes the condensation of ATP and 5-phosphoribose 1-diphosphate to form N'-(5'-phosphoribosyl)-ATP (PR-ATP). Has a crucial role in the pathway because the rate of histidine biosynthesis seems to be controlled primarily by regulation of HisG enzymatic activity. The protein is ATP phosphoribosyltransferase of Alkaliphilus metalliredigens (strain QYMF).